Consider the following 502-residue polypeptide: Keratin-associated protein 16-1 (502 aa).

15 repeat units span residues 4–8 (CCCSR), 58–62 (CCQPS), 73–77 (CCEAT), 93–97 (CCEAT), 108–112 (CCQPV), 113–117 (CCEAT), 133–137 (CCEAT), 152–156 (CCETS), 177–181 (CCQPV), 187–191 (CCSAV), 212–216 (CCQPV), 222–226 (CCPSV), 272–276 (CCVQG), 292–296 (CCVSS), and 347–351 (CCRPG). Positions 73-307 (CCEATICEPS…CQPVCPEPSP (235 aa)) are 15 X 5 AA repeats of C-C-X(3). Positions 435 to 502 (RQPCTDSDND…QPAASKPADR (68 aa)) are disordered. Over residues 489-502 (AAAPQPAASKPADR) the composition is skewed to low complexity.

This sequence belongs to the KRTAP type 16 family. Interacts with hair keratins.

Its function is as follows. In the hair cortex, hair keratin intermediate filaments are embedded in an interfilamentous matrix, consisting of hair keratin-associated proteins (KRTAP), which are essential for the formation of a rigid and resistant hair shaft through their extensive disulfide bond cross-linking with abundant cysteine residues of hair keratins. The matrix proteins include the high-sulfur and high-glycine-tyrosine keratins. The chain is Keratin-associated protein 16-1 (Krtap16-1) from Mus musculus (Mouse).